The following is a 438-amino-acid chain: Trigger factor (438 aa).

Residues glutamate 163–proline 249 enclose the PPIase FKBP-type domain.

It belongs to the FKBP-type PPIase family. Tig subfamily.

The protein resides in the cytoplasm. The enzyme catalyses [protein]-peptidylproline (omega=180) = [protein]-peptidylproline (omega=0). Its function is as follows. Involved in protein export. Acts as a chaperone by maintaining the newly synthesized protein in an open conformation. Functions as a peptidyl-prolyl cis-trans isomerase. This is Trigger factor from Desulfatibacillum aliphaticivorans.